A 336-amino-acid polypeptide reads, in one-letter code: Cytochrome P450 monooxygenase lcsN (336 aa).

C271 serves as a coordination point for heme.

The protein belongs to the cytochrome P450 family. Heme serves as cofactor.

It functions in the pathway secondary metabolite biosynthesis. Its function is as follows. Cytochrome P450 monooxygenase; part of the gene cluster that mediates the biosynthesis of the lipopeptide antibiotics leucinostatins that show extensive biological activities, including antimalarial, antiviral, antibacterial, antifungal, and antitumor activities, as well as phytotoxic. Leucinostatin A contains nine amino acid residues, including the unusual amino acid 4-methyl-L-proline (MePro), 2-amino-6-hydroxy-4-methyl-8-oxodecanoic acid (AHyMeOA), 3-hydroxyleucine (HyLeu), alpha-aminoisobutyric acid (AIB), beta-Ala, a 4-methylhex-2-enoic acid at the N-terminus as well as a N1,N1-dimethylpropane-1,2-diamine (DPD) at the C-terminus. The biosynthesis of leucinostatins is probably initiated with the assembly of 4-methylhex-2-enoic acid by a reducing PKS. Two reducing polyketide synthases, lcsB and lcsC, have been identified in the cluster and it is not clear which is the one that assembles 4-methylhex-2-enoic acid since both contain KS, AT, DH, cMT, ER, KR and ACP domains. The polyketide residue might be transferred to the NRPS lcsA, mediated by two additional enzymes, the acyl-CoA ligase lcsD and the thioesterase lcsE. The linear polyketide carboxylic acid, which is released from PKS, is converted to a CoA thioester by lcsD, and then lcsE hydrolyzes the thiol bond and shuttles the polyketide intermediate to lcsA. The C domain of the first module catalyzed the condensation of 4-methylhex-2-enoic acid and MePro carried by domain A1, followed by successive condensations of nine amino acids to trigger the elongation of the linear peptide. A5 and A6 domains of lcsA are proposed to incorporate leucine, A2 AHyMeOA, and A3 incorporates HyLeu. A4, A7 and A8 incorporate AIB. The AHyMeOA in leucinostatin A activated by the A2 might be produced by the second PKS (lcsB or lcsC) present within the cluster. The MePro is probably produced via leucine cyclization and may originate from a separate pathway, independent of the cluster. Another nonproteinogenic amino acid, beta-Ala, could be produced by an aspartic acid decarboxylase also localized outside of the cluster. Two candidates are VFPBJ_01400 and VFPBJ_10476. The final peptide scaffold may be released by the NAD(P)H-dependent thioester reductase (TE) at the C-terminal region of lcsA. Transamination of the lcsA product by the transaminase lcsP may produce DPD at the C-terminus. Further hydroxylation steps performed alternatively by the cytochrome P450 monooxygenases lcsI, lcsK and lcsN then yield the non-methylated leucinostatins precursor. It is also possible that leucines can be hydroxylated prior to their incorporation into the peptide. Varying extents of methylation then lead to the formation of leucinostatins A and B. The chain is Cytochrome P450 monooxygenase lcsN from Purpureocillium lilacinum (Paecilomyces lilacinus).